A 480-amino-acid polypeptide reads, in one-letter code: V-type ATP synthase beta chain 2 (480 aa).

It belongs to the ATPase alpha/beta chains family.

Functionally, produces ATP from ADP in the presence of a proton gradient across the membrane. The V-type beta chain is a regulatory subunit. The sequence is that of V-type ATP synthase beta chain 2 (atpB2) from Treponema pallidum (strain Nichols).